The chain runs to 323 residues: Olfactory receptor 6T1 (323 aa).

The Extracellular segment spans residues 1 to 25; the sequence is MNPENWTQVTSFVLLGFPSSHLIQF. Asn5 carries N-linked (GlcNAc...) asparagine glycosylation. Residues 26–46 form a helical membrane-spanning segment; it reads LVFLGLMVTYIVTATGKLLII. Residues 47-54 are Cytoplasmic-facing; it reads VLSWIDQR. A helical membrane pass occupies residues 55-75; sequence LHIQMYFFLRNFSFLELLLVT. Residues 76–99 lie on the Extracellular side of the membrane; sequence VVVPKMLVVILTGDHTISFVSCII. The cysteines at positions 97 and 189 are disulfide-linked. A helical membrane pass occupies residues 100 to 120; that stretch reads QSYLYFFLGTTDFFLLAVMSL. Residues 121–139 are Cytoplasmic-facing; sequence DRYLAICRPLRYETLMNGH. The helical transmembrane segment at 140 to 160 threads the bilayer; the sequence is VCSQLVLASWLAGFLWVLCPT. Residues 161–197 are Extracellular-facing; that stretch reads VLMASLPFCGPNGIDHFFRDSWPLLRLSCGDTHLLKL. Residues 198–217 traverse the membrane as a helical segment; the sequence is VAFMLSTLVLLGSLALTSVS. The Cytoplasmic segment spans residues 218–237; that stretch reads YACILATVLRAPTAAERRKA. A helical membrane pass occupies residues 238–258; sequence FSTCASHLTVVVIIYGSSIFL. Over 259–271 the chain is Extracellular; the sequence is YIRMSEAQSKLLN. Residues 272 to 292 traverse the membrane as a helical segment; sequence KGASVLSCIITPLLNPFIFTL. Topologically, residues 293 to 323 are cytoplasmic; the sequence is RNDKVQQALREALGWPRLTAVMKLRVTSQRK.

Belongs to the G-protein coupled receptor 1 family.

It is found in the cell membrane. Odorant receptor. This is Olfactory receptor 6T1 (OR6T1) from Homo sapiens (Human).